A 95-amino-acid chain; its full sequence is Large ribosomal subunit protein bL27 (95 aa).

The propeptide occupies methionine 1–phenylalanine 12. Residues glycine 17–serine 37 are disordered.

It belongs to the bacterial ribosomal protein bL27 family. In terms of processing, the N-terminus is cleaved by ribosomal processing cysteine protease Prp.

This Malacoplasma penetrans (strain HF-2) (Mycoplasma penetrans) protein is Large ribosomal subunit protein bL27.